The following is a 246-amino-acid chain: Carbonic anhydrase (246 aa).

The signal sequence occupies residues 1–22 (MKTSLGKAALLALSMMPVTVFA). An Alpha-carbonic anhydrase domain is found at 23 to 246 (SHWSYEGEGS…QPLNGRVVIE (224 aa)). An intrachain disulfide couples Cys-46 to Cys-201. Catalysis depends on His-84, which acts as the Proton acceptor. The Zn(2+) site is built by His-111, His-113, and His-130. 197–198 (TT) is a binding site for substrate.

It belongs to the alpha-carbonic anhydrase family. Requires Zn(2+) as cofactor.

It localises to the periplasm. The enzyme catalyses hydrogencarbonate + H(+) = CO2 + H2O. Functionally, reversible hydration of carbon dioxide. The protein is Carbonic anhydrase (cah) of Klebsiella pneumoniae.